Here is a 103-residue protein sequence, read N- to C-terminus: Cyanovirin-N homolog (103 aa).

Belongs to the cyanovirin-N family.

Functionally, mannose-binding lectin. This Tuber borchii (White truffle) protein is Cyanovirin-N homolog.